The primary structure comprises 182 residues: Large ribosomal subunit protein uL6 (182 aa).

The protein belongs to the universal ribosomal protein uL6 family. As to quaternary structure, part of the 50S ribosomal subunit.

In terms of biological role, this protein binds to the 23S rRNA, and is important in its secondary structure. It is located near the subunit interface in the base of the L7/L12 stalk, and near the tRNA binding site of the peptidyltransferase center. The chain is Large ribosomal subunit protein uL6 from Karelsulcia muelleri (strain GWSS) (Sulcia muelleri).